The following is a 50-amino-acid chain: uncharacterized protein (50 aa).

The helical transmembrane segment at 5–19 (IIIIVIVIIIFFFYL) threads the bilayer. Positions 19-50 (LKQKKLTNCETQVVKVQKDIDEINLKLKKLNK) form a coiled coil.

It localises to the membrane. This is an uncharacterized protein from Acheta domesticus (House cricket).